Reading from the N-terminus, the 209-residue chain is Prolactin (209 aa).

Positions 1–24 (MAQRFKGSNLFLTALLCLASQGHA) are cleaved as a signal peptide. 2 disulfides stabilise this stretch: C70–C184 and C201–C209.

Belongs to the somatotropin/prolactin family.

It localises to the secreted. In Anguilla japonica (Japanese eel), this protein is Prolactin (prl).